The following is a 298-amino-acid chain: Ornithine carbamoyltransferase (298 aa).

Residues 50–53 (STRT), Gln77, Arg101, and 128–131 (HPCQ) contribute to the carbamoyl phosphate site. Residues Asn159, Asp216, and 220–221 (SM) each bind L-ornithine. Residues 256 to 257 (CL) and Arg284 each bind carbamoyl phosphate.

It belongs to the aspartate/ornithine carbamoyltransferase superfamily. OTCase family.

The protein resides in the cytoplasm. It catalyses the reaction carbamoyl phosphate + L-ornithine = L-citrulline + phosphate + H(+). It participates in amino-acid biosynthesis; L-arginine biosynthesis; L-arginine from L-ornithine and carbamoyl phosphate: step 1/3. Functionally, reversibly catalyzes the transfer of the carbamoyl group from carbamoyl phosphate (CP) to the N(epsilon) atom of ornithine (ORN) to produce L-citrulline. This chain is Ornithine carbamoyltransferase, found in Methylococcus capsulatus (strain ATCC 33009 / NCIMB 11132 / Bath).